The following is a 61-amino-acid chain: Translational regulator CsrA (61 aa).

Belongs to the CsrA/RsmA family. In terms of assembly, homodimer; the beta-strands of each monomer intercalate to form a hydrophobic core, while the alpha-helices form wings that extend away from the core.

It is found in the cytoplasm. Its function is as follows. A key translational regulator that binds mRNA to regulate translation initiation and/or mRNA stability. Mediates global changes in gene expression, shifting from rapid growth to stress survival by linking envelope stress, the stringent response and the catabolite repression systems. Usually binds in the 5'-UTR; binding at or near the Shine-Dalgarno sequence prevents ribosome-binding, repressing translation, binding elsewhere in the 5'-UTR can activate translation and/or stabilize the mRNA. Its function is antagonized by small RNA(s). The protein is Translational regulator CsrA of Glaesserella parasuis serovar 5 (strain SH0165) (Haemophilus parasuis).